The following is a 518-amino-acid chain: MRDFQSRFADRYNQITNSYSYSSSRQGLITGMVNVGSFFGCLLSSPVADKIGKRLSIIVWTTVYLIGIIIQVTTVPSWVQILVAKIWTGLSIGALSVITPGYQSEVAPAIMRGAIVTTYQLFITLGIFIAACINMGTHKYSHGTTAQWRISIGINLLWGIITLVGIIFLPESPRYLIAIGKDDEALKIMCYNNDLPLEHEIIQTEYHTIKSDCDAELAGGPARWPEIFNANIRYRTFLGMAVMMFQQLTGANYYFYYGTQVFRGTGMDSPYLAALIPDAVNCGCTFGAIFVLEFFGRRSPLIVGGIWQYICFFIYAAVGDRALYHKNGTSNHRAGAVMIVFSCLFIFSFSQTWAPAAYVIVGESYPVRYRSKCAAVATSANWFWNFLISFFTPFITNSIGFKYGYIFASCNLTGAAIIFLFVHETKGRTLEEINTMYASNLKPWMPHPEGYREFGREQNNATLKSHIGLNGETTELIENTDNQGDSGSFQTSTPDDSRPEQNQASATYIRPDKREPRL.

The Cytoplasmic segment spans residues 1-27 (MRDFQSRFADRYNQITNSYSYSSSRQG). The chain crosses the membrane as a helical span at residues 28–48 (LITGMVNVGSFFGCLLSSPVA). Topologically, residues 49–54 (DKIGKR) are extracellular. A helical transmembrane segment spans residues 55–75 (LSIIVWTTVYLIGIIIQVTTV). Residues 76 to 77 (PS) lie on the Cytoplasmic side of the membrane. The helical transmembrane segment at 78-98 (WVQILVAKIWTGLSIGALSVI) threads the bilayer. Residues 99 to 112 (TPGYQSEVAPAIMR) lie on the Extracellular side of the membrane. The helical transmembrane segment at 113-133 (GAIVTTYQLFITLGIFIAACI) threads the bilayer. Topologically, residues 134–149 (NMGTHKYSHGTTAQWR) are cytoplasmic. The helical transmembrane segment at 150–170 (ISIGINLLWGIITLVGIIFLP) threads the bilayer. Over 171 to 236 (ESPRYLIAIG…IFNANIRYRT (66 aa)) the chain is Extracellular. A helical transmembrane segment spans residues 237–257 (FLGMAVMMFQQLTGANYYFYY). Residues 258–271 (GTQVFRGTGMDSPY) lie on the Cytoplasmic side of the membrane. A helical transmembrane segment spans residues 272–292 (LAALIPDAVNCGCTFGAIFVL). Over 293–298 (EFFGRR) the chain is Extracellular. Residues 299–319 (SPLIVGGIWQYICFFIYAAVG) form a helical membrane-spanning segment. Residues 320 to 333 (DRALYHKNGTSNHR) are Cytoplasmic-facing. Residues 334 to 354 (AGAVMIVFSCLFIFSFSQTWA) form a helical membrane-spanning segment. The Extracellular segment spans residues 355-374 (PAAYVIVGESYPVRYRSKCA). Residues 375–395 (AVATSANWFWNFLISFFTPFI) form a helical membrane-spanning segment. Topologically, residues 396–402 (TNSIGFK) are cytoplasmic. Residues 403 to 423 (YGYIFASCNLTGAAIIFLFVH) form a helical membrane-spanning segment. The Extracellular segment spans residues 424–518 (ETKGRTLEEI…IRPDKREPRL (95 aa)). Residues 477 to 506 (IENTDNQGDSGSFQTSTPDDSRPEQNQASA) show a composition bias toward polar residues. The interval 477-518 (IENTDNQGDSGSFQTSTPDDSRPEQNQASATYIRPDKREPRL) is disordered.

This sequence belongs to the major facilitator superfamily. Sugar transporter (TC 2.A.1.1) family.

It is found in the membrane. This chain is Probable high-affinity hexose transporter ght7 (ght7), found in Schizosaccharomyces pombe (strain 972 / ATCC 24843) (Fission yeast).